The primary structure comprises 37 residues: Large ribosomal subunit protein bL36c (37 aa).

Belongs to the bacterial ribosomal protein bL36 family.

It is found in the plastid. The protein resides in the chloroplast. This is Large ribosomal subunit protein bL36c from Lolium perenne (Perennial ryegrass).